A 498-amino-acid chain; its full sequence is Cytochrome P450 71B24 (498 aa).

Residues 1–21 (MSILLYFIALLSLIIIKKIKD) form a helical membrane-spanning segment. Residue C442 coordinates heme.

The protein belongs to the cytochrome P450 family. Heme serves as cofactor.

Its subcellular location is the membrane. The protein is Cytochrome P450 71B24 (CYP71B24) of Arabidopsis thaliana (Mouse-ear cress).